The primary structure comprises 395 residues: N5-carboxyaminoimidazole ribonucleotide synthase (395 aa).

Residues Lys109, Lys149, Glu184–Ile187, Glu192, and Asn268–Glu269 contribute to the ATP site. In terms of domain architecture, ATP-grasp spans Arg113 to Ala298.

This sequence belongs to the PurK/PurT family. In terms of assembly, homodimer.

It catalyses the reaction 5-amino-1-(5-phospho-beta-D-ribosyl)imidazole + hydrogencarbonate + ATP = 5-carboxyamino-1-(5-phospho-D-ribosyl)imidazole + ADP + phosphate + 2 H(+). It functions in the pathway purine metabolism; IMP biosynthesis via de novo pathway; 5-amino-1-(5-phospho-D-ribosyl)imidazole-4-carboxylate from 5-amino-1-(5-phospho-D-ribosyl)imidazole (N5-CAIR route): step 1/2. Its function is as follows. Catalyzes the ATP-dependent conversion of 5-aminoimidazole ribonucleotide (AIR) and HCO(3)(-) to N5-carboxyaminoimidazole ribonucleotide (N5-CAIR). The protein is N5-carboxyaminoimidazole ribonucleotide synthase of Synechococcus elongatus (strain ATCC 33912 / PCC 7942 / FACHB-805) (Anacystis nidulans R2).